Reading from the N-terminus, the 390-residue chain is Adherens junction-associated protein 1 (390 aa).

An N-terminal signal peptide occupies residues 1–37 (MWITQLLGIRSGPPLGSHAWILIAIFQLAMDFIICES). The Extracellular portion of the chain corresponds to 38-262 (ESPGKAYKHL…NDTSGLAVHQ (225 aa)). Residues 218–253 (LQNPGIHNGKKSPGRISTTDPNPGNGKTARPPRIPN) are disordered. Residues 263–283 (IITITVSLIMVIAALITTLVL) form a helical membrane-spanning segment. Residues 283–390 (LKNCCAQSGN…VSEKWFEISC (108 aa)) are targeting signals. Topologically, residues 284–390 (KNCCAQSGNA…VSEKWFEISC (107 aa)) are cytoplasmic.

It is found in the basolateral cell membrane. The protein resides in the apical cell membrane. The protein localises to the cell junction. It localises to the adherens junction. In terms of biological role, may play a role in cell adhesion and cell migration. This chain is Adherens junction-associated protein 1 (ajap1), found in Xenopus tropicalis (Western clawed frog).